The primary structure comprises 842 residues: Alanine--tRNA ligase (842 aa).

Residues His-549, His-553, Cys-650, and His-654 each coordinate Zn(2+).

Belongs to the class-II aminoacyl-tRNA synthetase family. It depends on Zn(2+) as a cofactor.

Its subcellular location is the cytoplasm. The enzyme catalyses tRNA(Ala) + L-alanine + ATP = L-alanyl-tRNA(Ala) + AMP + diphosphate. Functionally, catalyzes the attachment of alanine to tRNA(Ala) in a two-step reaction: alanine is first activated by ATP to form Ala-AMP and then transferred to the acceptor end of tRNA(Ala). Also edits incorrectly charged Ser-tRNA(Ala) and Gly-tRNA(Ala) via its editing domain. The polypeptide is Alanine--tRNA ligase (Campylobacter jejuni subsp. jejuni serotype O:2 (strain ATCC 700819 / NCTC 11168)).